A 75-amino-acid polypeptide reads, in one-letter code: Serine rich endogenous peptide 20 (75 aa).

A signal peptide spans 1–25 (MYKLTLCILTLSFLLLSGLSNTVLA). An SCOOP motif motif is present at residues 52-66 (KIGASGSNSGRAPSC). A disordered region spans residues 54 to 75 (GASGSNSGRAPSCNNSCKPNRP). Positions 56–58 (SGS) match the SxS motif essential for MIK2 binding motif. Residues 56–75 (SGSNSGRAPSCNNSCKPNRP) show a composition bias toward polar residues.

This sequence belongs to the serine rich endogenous peptide (SCOOP) phytocytokine family. In terms of assembly, interacts with MIK2 (via extracellular leucine-rich repeat domain); this interaction triggers the formation of complex between MIK2 and the BAK1/SERK3 and SERK4 coreceptors, and subsequent BAK1 activation by phosphorylation. As to expression, mostly expressed in roots.

It localises to the cell membrane. The protein localises to the secreted. The protein resides in the extracellular space. It is found in the apoplast. In terms of biological role, brassicaceae-specific phytocytokine (plant endogenous peptide released into the apoplast) perceived by MIK2 in a BAK1/SERK3 and SERK4 coreceptors-dependent manner, that modulates various physiological and antimicrobial processes including growth prevention and reactive oxygen species (ROS) response regulation. Inhibits root growth. The chain is Serine rich endogenous peptide 20 from Arabidopsis thaliana (Mouse-ear cress).